We begin with the raw amino-acid sequence, 502 residues long: ATP synthase subunit alpha (502 aa).

A disordered region spans residues 115–138; it reads VDGLGPIETTETRPIESPAPGVMD. 169 to 176 is a binding site for ATP; that stretch reads GDRQTGKT.

The protein belongs to the ATPase alpha/beta chains family. As to quaternary structure, F-type ATPases have 2 components, CF(1) - the catalytic core - and CF(0) - the membrane proton channel. CF(1) has five subunits: alpha(3), beta(3), gamma(1), delta(1), epsilon(1). CF(0) has three main subunits: a(1), b(2) and c(9-12). The alpha and beta chains form an alternating ring which encloses part of the gamma chain. CF(1) is attached to CF(0) by a central stalk formed by the gamma and epsilon chains, while a peripheral stalk is formed by the delta and b chains.

The protein localises to the cell membrane. It carries out the reaction ATP + H2O + 4 H(+)(in) = ADP + phosphate + 5 H(+)(out). Functionally, produces ATP from ADP in the presence of a proton gradient across the membrane. The alpha chain is a regulatory subunit. In Geobacillus sp. (strain WCH70), this protein is ATP synthase subunit alpha.